The chain runs to 515 residues: 1-pyrroline-5-carboxylate dehydrogenase (515 aa).

Active-site residues include glutamate 286 and cysteine 320.

The protein belongs to the aldehyde dehydrogenase family. RocA subfamily.

It carries out the reaction L-glutamate 5-semialdehyde + NAD(+) + H2O = L-glutamate + NADH + 2 H(+). Its pathway is amino-acid degradation; L-proline degradation into L-glutamate; L-glutamate from L-proline: step 2/2. The protein is 1-pyrroline-5-carboxylate dehydrogenase of Geobacillus thermodenitrificans (strain NG80-2).